The following is a 247-amino-acid chain: ATP synthase subunit a, chloroplastic (247 aa).

5 consecutive transmembrane segments (helical) span residues 38-58 (QVLITSWVVITILLGSVVIAV), 95-115 (VPFIGTMFLFIFVSNWSGALL), 134-154 (INTTVALALLTSAAYFYAGLS), 199-219 (LVVVVLVSLVPLVVPIPVMFL), and 220-240 (GLFTSGIQALIFATLAAAYIG).

It belongs to the ATPase A chain family. In terms of assembly, F-type ATPases have 2 components, CF(1) - the catalytic core - and CF(0) - the membrane proton channel. CF(1) has five subunits: alpha(3), beta(3), gamma(1), delta(1), epsilon(1). CF(0) has four main subunits: a, b, b' and c.

It localises to the plastid. Its subcellular location is the chloroplast thylakoid membrane. In terms of biological role, key component of the proton channel; it plays a direct role in the translocation of protons across the membrane. The polypeptide is ATP synthase subunit a, chloroplastic (Lolium perenne (Perennial ryegrass)).